A 160-amino-acid polypeptide reads, in one-letter code: uncharacterized protein (160 aa).

3 consecutive C2H2-type zinc fingers follow at residues 10–32 (LSCL…LPTH), 41–64 (QTCD…KRYH), and 75–98 (FQCQ…KIEH). Position 115 is a phosphotyrosine (Tyr-115). A Phosphoserine modification is found at Ser-116.

It localises to the nucleus. May be involved in transcriptional regulation. This is an uncharacterized protein from Drosophila melanogaster (Fruit fly).